A 738-amino-acid polypeptide reads, in one-letter code: Junction plakoglobin (738 aa).

12 ARM repeats span residues 128–167, 168–211, 212–251, 254–293, 294–337, 338–377, 379–416, 419–460, 466–506, 508–547, 570–609, and 611–657; these read NYQD…QLSK, KEAS…LSHH, REGL…NLLL, EGAK…LLAY, GNQE…LSVC, PSNK…NLSD, ATKQ…NLTC, GRNK…HLTS, EVAQ…NLAL, PANH…QPYT, PVNR…ELAQ, and KEAA…ADYR.

This sequence belongs to the beta-catenin family. Homodimer.

Its subcellular location is the cell junction. It is found in the adherens junction. It localises to the desmosome. The protein localises to the cytoplasm. The protein resides in the cytoskeleton. Its subcellular location is the membrane. Common junctional plaque protein. The membrane-associated plaques are architectural elements in an important strategic position to influence the arrangement and function of both the cytoskeleton and the cells within the tissue. The presence of plakoglobin in both the desmosomes and in the intermediate junctions suggests that it plays a central role in the structure and function of submembranous plaques. This Xenopus laevis (African clawed frog) protein is Junction plakoglobin (jup).